The chain runs to 358 residues: Trace amine-associated receptor 7e (358 aa).

The Extracellular portion of the chain corresponds to Met-1 to Arg-47. An N-linked (GlcNAc...) asparagine glycan is attached at Asn-34. 2 disulfides stabilise this stretch: Cys-37-Cys-201 and Cys-120-Cys-205. The helical transmembrane segment at Leu-48–Val-68 threads the bilayer. Over Met-69–Asn-83 the chain is Cytoplasmic. Residues Phe-84–Ser-104 traverse the membrane as a helical segment. At Thr-105–Lys-121 the chain is on the extracellular side. A helical membrane pass occupies residues Leu-122 to Val-143. The Cytoplasmic segment spans residues Asp-144 to Lys-166. Residues Cys-167–Ala-187 form a helical membrane-spanning segment. The Extracellular portion of the chain corresponds to Ser-188–Ser-212. Asn-210 carries N-linked (GlcNAc...) asparagine glycosylation. Residues Trp-213–Ser-233 form a helical membrane-spanning segment. Topologically, residues Lys-234–Thr-274 are cytoplasmic. A helical transmembrane segment spans residues Leu-275–Ile-295. Residues Asp-296–Glu-309 lie on the Extracellular side of the membrane. The chain crosses the membrane as a helical span at residues Ile-310–Phe-333. At Arg-334 to Glu-358 the chain is on the cytoplasmic side.

This sequence belongs to the G-protein coupled receptor 1 family. As to expression, specifically expressed in neurons of the olfactory epithelium.

It is found in the cell membrane. Olfactory receptor specific for N,N-dimethylalkylamines trace amines. Trace amine compounds are enriched in animal body fluids and act on trace amine-associated receptors (TAARs) to elicit both intraspecific and interspecific innate behaviors. Ligand-binding causes a conformation change that triggers signaling via G(s)-class of G alpha proteins (GNAL or GNAS). The protein is Trace amine-associated receptor 7e of Mus musculus (Mouse).